The following is a 619-amino-acid chain: Dihydroxy-acid dehydratase (619 aa).

Asp-81 contributes to the Mg(2+) binding site. A [2Fe-2S] cluster-binding site is contributed by Cys-122. Positions 123 and 124 each coordinate Mg(2+). Lys-124 bears the N6-carboxylysine mark. Cys-195 contacts [2Fe-2S] cluster. Residue Glu-494 participates in Mg(2+) binding. Catalysis depends on Ser-520, which acts as the Proton acceptor.

Belongs to the IlvD/Edd family. Homodimer. [2Fe-2S] cluster serves as cofactor. It depends on Mg(2+) as a cofactor.

It catalyses the reaction (2R)-2,3-dihydroxy-3-methylbutanoate = 3-methyl-2-oxobutanoate + H2O. It carries out the reaction (2R,3R)-2,3-dihydroxy-3-methylpentanoate = (S)-3-methyl-2-oxopentanoate + H2O. Its pathway is amino-acid biosynthesis; L-isoleucine biosynthesis; L-isoleucine from 2-oxobutanoate: step 3/4. The protein operates within amino-acid biosynthesis; L-valine biosynthesis; L-valine from pyruvate: step 3/4. Functionally, functions in the biosynthesis of branched-chain amino acids. Catalyzes the dehydration of (2R,3R)-2,3-dihydroxy-3-methylpentanoate (2,3-dihydroxy-3-methylvalerate) into 2-oxo-3-methylpentanoate (2-oxo-3-methylvalerate) and of (2R)-2,3-dihydroxy-3-methylbutanoate (2,3-dihydroxyisovalerate) into 2-oxo-3-methylbutanoate (2-oxoisovalerate), the penultimate precursor to L-isoleucine and L-valine, respectively. This chain is Dihydroxy-acid dehydratase, found in Shewanella frigidimarina (strain NCIMB 400).